The following is a 118-amino-acid chain: Small ribosomal subunit protein uS13 (118 aa).

A disordered region spans residues 93–118 (RGLPVRGQRTKTNARTRKGPRKPIRK).

Belongs to the universal ribosomal protein uS13 family. As to quaternary structure, part of the 30S ribosomal subunit. Forms a loose heterodimer with protein S19. Forms two bridges to the 50S subunit in the 70S ribosome.

Located at the top of the head of the 30S subunit, it contacts several helices of the 16S rRNA. In the 70S ribosome it contacts the 23S rRNA (bridge B1a) and protein L5 of the 50S subunit (bridge B1b), connecting the 2 subunits; these bridges are implicated in subunit movement. Contacts the tRNAs in the A and P-sites. This is Small ribosomal subunit protein uS13 from Pseudomonas fluorescens (strain ATCC BAA-477 / NRRL B-23932 / Pf-5).